Reading from the N-terminus, the 241-residue chain is 1-(5-phosphoribosyl)-5-[(5-phosphoribosylamino)methylideneamino] imidazole-4-carboxamide isomerase (241 aa).

Catalysis depends on D8, which acts as the Proton acceptor. The Proton donor role is filled by D129.

This sequence belongs to the HisA/HisF family.

Its subcellular location is the cytoplasm. It carries out the reaction 1-(5-phospho-beta-D-ribosyl)-5-[(5-phospho-beta-D-ribosylamino)methylideneamino]imidazole-4-carboxamide = 5-[(5-phospho-1-deoxy-D-ribulos-1-ylimino)methylamino]-1-(5-phospho-beta-D-ribosyl)imidazole-4-carboxamide. It functions in the pathway amino-acid biosynthesis; L-histidine biosynthesis; L-histidine from 5-phospho-alpha-D-ribose 1-diphosphate: step 4/9. The sequence is that of 1-(5-phosphoribosyl)-5-[(5-phosphoribosylamino)methylideneamino] imidazole-4-carboxamide isomerase from Caulobacter sp. (strain K31).